A 142-amino-acid polypeptide reads, in one-letter code: Large ribosomal subunit protein uL11 (142 aa).

It belongs to the universal ribosomal protein uL11 family. In terms of assembly, part of the ribosomal stalk of the 50S ribosomal subunit. Interacts with L10 and the large rRNA to form the base of the stalk. L10 forms an elongated spine to which L12 dimers bind in a sequential fashion forming a multimeric L10(L12)X complex. Post-translationally, one or more lysine residues are methylated.

Forms part of the ribosomal stalk which helps the ribosome interact with GTP-bound translation factors. In Shewanella sediminis (strain HAW-EB3), this protein is Large ribosomal subunit protein uL11.